Here is a 457-residue protein sequence, read N- to C-terminus: Heme sensor protein HssS (457 aa).

A run of 2 helical transmembrane segments spans residues 9-29 (IAIYSITVILFSALISFVLTN) and 164-184 (TFLAVLLMLLLFISISLVIAS). One can recognise an HAMP domain in the interval 186–238 (YSIIRPVKKLKLATERLIDGDFETPIKQTRKDEIGTLQYHFNKMRESLGQVDQ). The Histidine kinase domain maps to 246–456 (NVSHEIKTPL…TFTITLPNNS (211 aa)). His-249 is subject to Phosphohistidine; by autocatalysis.

Post-translationally, autophosphorylated.

The protein resides in the cell membrane. It carries out the reaction ATP + protein L-histidine = ADP + protein N-phospho-L-histidine.. Member of the two-component regulatory system HssS/HssR involved in intracellular heme homeostasis and tempering of staphylococcal virulence. HssS functions as a heme sensor histidine kinase which is autophosphorylated at a histidine residue and transfers its phosphate group to an aspartate residue of HssR. HssR/HssS activates the expression of hrtAB, an efflux pump, in response to extracellular heme, hemin, hemoglobin or blood. The sequence is that of Heme sensor protein HssS (hssS) from Staphylococcus aureus (strain Mu3 / ATCC 700698).